A 403-amino-acid chain; its full sequence is Prostaglandin E2 receptor EP1 subtype (403 aa).

Residues 1–38 (MSLCGPLNLSLAGEATPCAEPGAPNASAWPPSGRASAS) lie on the Extracellular side of the membrane. Residues Asn-8 and Asn-25 are each glycosylated (N-linked (GlcNAc...) asparagine). A helical membrane pass occupies residues 39–65 (PALPIFSMTLGAVSNVLALALLAQAAG). Residues 66–75 (RLRRRRSAAT) are Cytoplasmic-facing. The chain crosses the membrane as a helical span at residues 76–99 (FLLFVASLLATDLAGHVIPGALVL). At 100–114 (RLYAAGRSPAGGACH) the chain is on the extracellular side. Cys-113 and Cys-191 are joined by a disulfide. Residues 115–136 (FLGGCMVFFGLCPLLLGCGMAV) traverse the membrane as a helical segment. The Cytoplasmic portion of the chain corresponds to 137–158 (ERCVGVTRPLLHAARVSAARAR). The helical transmembrane segment at 159–180 (LALAVLAALALAVALLPLARVG) threads the bilayer. The Extracellular segment spans residues 181–204 (RYELQYPGTWCFIGLRPAGGWRQA). A helical transmembrane segment spans residues 205-230 (LLAGLFAGLGLAALLAALVCNTLSGL). The Cytoplasmic portion of the chain corresponds to 231 to 295 (ALLRARWRRR…ARRARAHDVE (65 aa)). Residues 243-287 (RRRPQACGPDGRRHWGARAPRSASASSSSSVASVPGGSPGRGSAR) form a disordered region. Low complexity predominate over residues 259–278 (ARAPRSASASSSSSVASVPG). Residues 296 to 322 (MVGQLVGIMVVSCICWSPLLVLVVLAV) traverse the membrane as a helical segment. The Extracellular segment spans residues 323–333 (GGWGSSSLQRP). A helical transmembrane segment spans residues 334–355 (LFLAVRLASWNQILDPWVYILL). Topologically, residues 356–403 (RQAVLRQLLRLLPPRPGAKGSPAGLALTRSAWEASSLRSSRHSSLSHL) are cytoplasmic.

Belongs to the G-protein coupled receptor 1 family.

Its subcellular location is the cell membrane. Its function is as follows. Receptor for prostaglandin E2 (PGE2). The activity of this receptor is mediated by G(q) proteins which activate a phosphatidylinositol-calcium second messenger system. May play a role as an important modulator of renal function. Implicated the smooth muscle contractile response to PGE2 in various tissues. The sequence is that of Prostaglandin E2 receptor EP1 subtype (PTGER1) from Canis lupus familiaris (Dog).